Here is a 207-residue protein sequence, read N- to C-terminus: Ribosome maturation factor RimM (207 aa).

The PRC barrel domain occupies 114–207; that stretch reads DDEYYWVDLI…RIDSDWPLDY (94 aa).

It belongs to the RimM family. In terms of assembly, binds ribosomal protein uS19.

It localises to the cytoplasm. An accessory protein needed during the final step in the assembly of 30S ribosomal subunit, possibly for assembly of the head region. Essential for efficient processing of 16S rRNA. May be needed both before and after RbfA during the maturation of 16S rRNA. It has affinity for free ribosomal 30S subunits but not for 70S ribosomes. This chain is Ribosome maturation factor RimM, found in Bordetella bronchiseptica (strain ATCC BAA-588 / NCTC 13252 / RB50) (Alcaligenes bronchisepticus).